The following is a 320-amino-acid chain: o-succinylbenzoate synthase (320 aa).

K133 acts as the Proton donor in catalysis. Mg(2+)-binding residues include D161, E190, and D213. K235 serves as the catalytic Proton acceptor.

The protein belongs to the mandelate racemase/muconate lactonizing enzyme family. MenC type 1 subfamily. Requires a divalent metal cation as cofactor.

It carries out the reaction (1R,6R)-6-hydroxy-2-succinyl-cyclohexa-2,4-diene-1-carboxylate = 2-succinylbenzoate + H2O. It participates in quinol/quinone metabolism; 1,4-dihydroxy-2-naphthoate biosynthesis; 1,4-dihydroxy-2-naphthoate from chorismate: step 4/7. The protein operates within quinol/quinone metabolism; menaquinone biosynthesis. Its function is as follows. Converts 2-succinyl-6-hydroxy-2,4-cyclohexadiene-1-carboxylate (SHCHC) to 2-succinylbenzoate (OSB). The chain is o-succinylbenzoate synthase from Salmonella newport (strain SL254).